The chain runs to 530 residues: Histone-arginine methyltransferase CARMER (530 aa).

The SAM-dependent MTase PRMT-type domain maps to 141 to 450; it reads ASQYFQFYGY…QSYDVTIDLH (310 aa). S-adenosyl-L-methionine is bound by residues Gln-154, Arg-163, Gly-187, Glu-209, Glu-238, and Thr-266. Asymmetric dimethylarginine; by autocatalysis is present on Arg-501.

It belongs to the class I-like SAM-binding methyltransferase superfamily. Protein arginine N-methyltransferase family. As to quaternary structure, homodimer. Post-translationally, the dimethylated protein is the major form.

It localises to the cytoplasm. The protein localises to the nucleus. It catalyses the reaction L-arginyl-[protein] + 2 S-adenosyl-L-methionine = N(omega),N(omega)-dimethyl-L-arginyl-[protein] + 2 S-adenosyl-L-homocysteine + 2 H(+). Its function is as follows. Methylates (mono- and asymmetric dimethylation) the guanidino nitrogens of arginyl residues in proteins. May methylate histone H3 at 'Arg-17' and activate transcription via chromatin remodeling. This is Histone-arginine methyltransferase CARMER (Art4) from Drosophila yakuba (Fruit fly).